Consider the following 243-residue polypeptide: Uridylate kinase (243 aa).

15–18 (KLSG) is an ATP binding site. Residues 23–28 (GEEGFG) are involved in allosteric activation by GTP. Gly-57 provides a ligand contact to UMP. ATP-binding residues include Gly-58 and Arg-62. Residues Asp-77 and 138–145 (TGNPFFTT) contribute to the UMP site. Residues Thr-165, Phe-171, and Asp-174 each contribute to the ATP site.

This sequence belongs to the UMP kinase family. As to quaternary structure, homohexamer.

The protein localises to the cytoplasm. It catalyses the reaction UMP + ATP = UDP + ADP. It participates in pyrimidine metabolism; CTP biosynthesis via de novo pathway; UDP from UMP (UMPK route): step 1/1. Its activity is regulated as follows. Allosterically activated by GTP. Inhibited by UTP. In terms of biological role, catalyzes the reversible phosphorylation of UMP to UDP. This chain is Uridylate kinase, found in Aliivibrio fischeri (strain ATCC 700601 / ES114) (Vibrio fischeri).